The following is a 125-amino-acid chain: Small ribosomal subunit protein uS12 (125 aa).

The interval 1–23 (MATVNQLVRKGRTKRTAKSSVPA) is disordered. Asp-89 carries the post-translational modification 3-methylthioaspartic acid. Residues 102-125 (ADTAGVDKRRQGRSKYGAKRPKKK) are disordered. Positions 111–125 (RQGRSKYGAKRPKKK) are enriched in basic residues.

Belongs to the universal ribosomal protein uS12 family. Part of the 30S ribosomal subunit. Contacts proteins S8 and S17. May interact with IF1 in the 30S initiation complex.

Its function is as follows. With S4 and S5 plays an important role in translational accuracy. In terms of biological role, interacts with and stabilizes bases of the 16S rRNA that are involved in tRNA selection in the A site and with the mRNA backbone. Located at the interface of the 30S and 50S subunits, it traverses the body of the 30S subunit contacting proteins on the other side and probably holding the rRNA structure together. The combined cluster of proteins S8, S12 and S17 appears to hold together the shoulder and platform of the 30S subunit. This Halorhodospira halophila (strain DSM 244 / SL1) (Ectothiorhodospira halophila (strain DSM 244 / SL1)) protein is Small ribosomal subunit protein uS12.